The following is an 88-amino-acid chain: ATPase inhibitor mai-1, mitochondrial (88 aa).

Residues 1 to 18 show a composition bias toward gly residues; it reads MSGSGSGSGAGHGGGSGG. The tract at residues 1–41 is disordered; it reads MSGSGSGSGAGHGGGSGGSIREAGGSLGMMGATREEEYFRR. Residues 39–87 are a coiled coil; it reads FRRQQKDQLDNLKKKLEADMTQSQQEIRDHEKVLEQHQQRLKEIEKGHG.

The protein belongs to the ATPase inhibitor family. In terms of processing, does not seem to include a transit peptide.

It is found in the mitochondrion. In terms of biological role, thought to be a regulatory component of the ATP-synthesizing complex in the mitochondria. The sequence is that of ATPase inhibitor mai-1, mitochondrial (mai-1) from Caenorhabditis elegans.